Here is a 907-residue protein sequence, read N- to C-terminus: Protein translocase subunit SecA (907 aa).

ATP-binding positions include Q87, 105 to 109, and D512; that span reads GEGKT. Residues 869–897 form a disordered region; sequence AESLSAHTPVVREGEKVGRNDPCPCGSGR. The segment covering 878-887 has biased composition (basic and acidic residues); sequence VVREGEKVGR. C891, C893, C902, and H903 together coordinate Zn(2+).

The protein belongs to the SecA family. In terms of assembly, monomer and homodimer. Part of the essential Sec protein translocation apparatus which comprises SecA, SecYEG and auxiliary proteins SecDF-YajC and YidC. The cofactor is Zn(2+).

The protein resides in the cell inner membrane. The protein localises to the cytoplasm. It carries out the reaction ATP + H2O + cellular proteinSide 1 = ADP + phosphate + cellular proteinSide 2.. Its function is as follows. Part of the Sec protein translocase complex. Interacts with the SecYEG preprotein conducting channel. Has a central role in coupling the hydrolysis of ATP to the transfer of proteins into and across the cell membrane, serving both as a receptor for the preprotein-SecB complex and as an ATP-driven molecular motor driving the stepwise translocation of polypeptide chains across the membrane. The protein is Protein translocase subunit SecA of Shewanella sediminis (strain HAW-EB3).